Reading from the N-terminus, the 790-residue chain is Cadherin-18 (790 aa).

Residues 1–24 (MKITSTSCICPVLVCLCFVQRCYG) form the signal peptide. A propeptide spanning residues 25-53 (TTHHGSIRGTRNQTKHIEGETEVHHRPKR) is cleaved from the precursor. Residue Asn36 is glycosylated (N-linked (GlcNAc...) asparagine). 5 Cadherin domains span residues 54 to 159 (GWVW…APKF), 160 to 268 (TDGP…PPRF), 269 to 383 (PQKH…PPLF), 384 to 486 (SMPS…DNPP), and 487 to 608 (ELAR…FLSS). Topologically, residues 54 to 608 (GWVWNQFFVL…TCHAEAFLSS (555 aa)) are extracellular. The N-linked (GlcNAc...) asparagine glycan is linked to Asn255. Asn455 and Asn536 each carry an N-linked (GlcNAc...) asparagine glycan. The helical transmembrane segment at 609–636 (AGLSTGALIAILLCVVILLAIVVLFITL) threads the bilayer. The Cytoplasmic portion of the chain corresponds to 637–790 (RRSKKEPLII…YGEIESERTT (154 aa)). Ser786 is subject to Phosphoserine.

The protein localises to the cell membrane. Functionally, cadherins are calcium-dependent cell adhesion proteins. They preferentially interact with themselves in a homophilic manner in connecting cells; cadherins may thus contribute to the sorting of heterogeneous cell types. In Bos taurus (Bovine), this protein is Cadherin-18 (CDH18).